A 548-amino-acid polypeptide reads, in one-letter code: Membrane protein insertase YidC (548 aa).

The next 5 membrane-spanning stretches (helical) occupy residues 6-26 (NLIL…WESD), 357-377 (NWGV…FPLT), 424-444 (LGGC…YWAL), 455-475 (FALW…PILM), and 503-523 (PIIF…YWLV).

It belongs to the OXA1/ALB3/YidC family. Type 1 subfamily. In terms of assembly, interacts with the Sec translocase complex via SecD. Specifically interacts with transmembrane segments of nascent integral membrane proteins during membrane integration.

It is found in the cell inner membrane. Required for the insertion and/or proper folding and/or complex formation of integral membrane proteins into the membrane. Involved in integration of membrane proteins that insert both dependently and independently of the Sec translocase complex, as well as at least some lipoproteins. Aids folding of multispanning membrane proteins. The polypeptide is Membrane protein insertase YidC (Aeromonas hydrophila subsp. hydrophila (strain ATCC 7966 / DSM 30187 / BCRC 13018 / CCUG 14551 / JCM 1027 / KCTC 2358 / NCIMB 9240 / NCTC 8049)).